Here is a 716-residue protein sequence, read N- to C-terminus: Forkhead box protein P2 (716 aa).

Residues methionine 1 to aspartate 28 are compositionally biased toward polar residues. 2 disordered regions span residues methionine 1–serine 45 and lysine 286–serine 340. Low complexity predominate over residues threonine 293–serine 306. The span at serine 316–leucine 325 shows a compositional bias: polar residues. Positions alanine 327–glycine 338 are enriched in basic and acidic residues. A C2H2-type zinc finger spans residues glycine 347 to histidine 372. The tract at residues valine 389 to leucine 410 is leucine-zipper. The tract at residues proline 423–valine 427 is CTBP1-binding. The span at threonine 439–glutamine 460 shows a compositional bias: low complexity. Residues threonine 439–threonine 466 are disordered. Residues arginine 505 to leucine 595 constitute a DNA-binding region (fork-head). Disordered regions lie at residues leucine 650–isoleucine 669 and valine 679–glutamate 716. Positions leucine 700–glutamate 716 are enriched in acidic residues.

As to quaternary structure, forms homodimers and heterodimers with FOXP1 and FOXP4. Dimerization is required for DNA-binding. Interacts with CTBP1. Interacts with FOXP1. Interacts with TBR1. Interacts with ZMYM2.

It is found in the nucleus. Transcriptional repressor that may play a role in the specification and differentiation of lung epithelium. May also play a role in developing neural, gastrointestinal and cardiovascular tissues. Can act with CTBP1 to synergistically repress transcription but CTPBP1 is not essential. Plays a role in synapse formation by regulating SRPX2 levels. The chain is Forkhead box protein P2 (FOXP2) from Pan paniscus (Pygmy chimpanzee).